Consider the following 458-residue polypeptide: uncharacterized protein (458 aa).

Positions 5–65 constitute a TRAM domain; the sequence is QAPVNKNDVV…KGYGFGRVLN (61 aa). [4Fe-4S] cluster-binding residues include cysteine 78, cysteine 84, cysteine 87, and cysteine 165. S-adenosyl-L-methionine contacts are provided by glutamine 289, tyrosine 318, glutamate 339, and aspartate 387. Cysteine 414 serves as the catalytic Nucleophile.

It belongs to the class I-like SAM-binding methyltransferase superfamily. RNA M5U methyltransferase family.

This is an uncharacterized protein from Halalkalibacterium halodurans (strain ATCC BAA-125 / DSM 18197 / FERM 7344 / JCM 9153 / C-125) (Bacillus halodurans).